A 301-amino-acid polypeptide reads, in one-letter code: Probable alpha-L-glutamate ligase (301 aa).

The 184-residue stretch at Leu104–Glu287 folds into the ATP-grasp domain. Residues Lys141, Glu178 to Phe179, Asp187, and Arg211 to Asn213 contribute to the ATP site. Positions 248, 260, and 262 each coordinate Mg(2+). The Mn(2+) site is built by Asp248, Glu260, and Asn262.

The protein belongs to the RimK family. The cofactor is Mg(2+). It depends on Mn(2+) as a cofactor.

The sequence is that of Probable alpha-L-glutamate ligase from Shewanella loihica (strain ATCC BAA-1088 / PV-4).